The sequence spans 97 residues: Defensin alpha 4 (97 aa).

The N-terminal stretch at 1–19 is a signal peptide; that stretch reads MRIIAILAAILLVALQVRA. A propeptide spanning residues 20–63 is cleaved from the precursor; the sequence is GPLQARGDEAPGQEQRGPEDQDISISFAWDKSSALQVSGSTRGM. Intrachain disulfides connect Cys-65-Cys-93, Cys-67-Cys-82, and Cys-72-Cys-92. A propeptide is located at residue Asp-97.

It belongs to the alpha-defensin family. Homodimer; homodimerization seems to be required for killing S.aureus, but not E.coli. Interacts with CD4. Interacts with Bacillus anthracis lef; homodimerization is required for the interaction. Post-translationally, the three-dimensional structure formed by the three intramolecular disulfide bridges is indispensable for effective bacterial killing.

It is found in the secreted. Its subcellular location is the cytoplasmic vesicle. It localises to the secretory vesicle. Functionally, host-defense peptide that has antimicrobial activity against Gram-negative bacteria, and to a lesser extent also against Gram-positive bacteria and fungi. Exhibits antimicrobial activity against Gram-negative E.coli and E.aerogenes and Gram-positive S.faecalis, S.aureus and B.cereus and the yeast C.albicans (in vitro). Inhibits corticotropin (ACTH)-stimulated corticosterone production (in vitro). Inhibits enzymatic activity of B.anthracis lef/anthrax lethal factor (in vitro). In Pan troglodytes (Chimpanzee), this protein is Defensin alpha 4 (DEFA4).